We begin with the raw amino-acid sequence, 301 residues long: Leucine-rich repeat-containing protein 30 (301 aa).

LRR repeat units follow at residues 72–93 (EVQK…VGKL), 95–116 (RIVV…VSLL), 118–139 (CLKV…LSLC), 141–163 (KLEV…ADLS), 164–185 (RLRK…VFSL), 187–208 (ELIF…IQHL), 210–231 (SLQI…LCLV), 233–254 (SLEL…LHLL), and 265–287 (MDKG…VEGG).

The protein is Leucine-rich repeat-containing protein 30 (LRRC30) of Homo sapiens (Human).